We begin with the raw amino-acid sequence, 362 residues long: MTPAGKRILVMAGGTGGHVFPALAVAKYLAQQGWQVRWLGTADRMEARLVPQYGFDIDFIDIKGVRGNGLIRKLAAPFKVVRSILQAKAVIAEFKPDVVLGMGGFASGPGGVAARLAGIPLVLHEQNAIPGMTNKLLSRIATQVLCAFKNTFTTVKAKVVGNPIRQELIALGAEPKPEADEALKVLVVGGSLGAKVFNDLMPEAVAILSQQQSVTVWHQVGKDNLAGVKAAYQQHGQDGGVNIAEFIDDMEAAYRWADVVLCRAGALTVSELAAVGLPSILVPYPHAVDDHQTRNGQVLVEAGAAFLLPQAILDVNKLAGKLQLLANDRTELARMGQRARDVAVLDATEQVAAVCISLAEKG.

Residues 15 to 17 (TGG), N127, R165, S191, I247, 266 to 271 (ALTVSE), and Q292 each bind UDP-N-acetyl-alpha-D-glucosamine.

It belongs to the glycosyltransferase 28 family. MurG subfamily.

It is found in the cell inner membrane. It carries out the reaction di-trans,octa-cis-undecaprenyl diphospho-N-acetyl-alpha-D-muramoyl-L-alanyl-D-glutamyl-meso-2,6-diaminopimeloyl-D-alanyl-D-alanine + UDP-N-acetyl-alpha-D-glucosamine = di-trans,octa-cis-undecaprenyl diphospho-[N-acetyl-alpha-D-glucosaminyl-(1-&gt;4)]-N-acetyl-alpha-D-muramoyl-L-alanyl-D-glutamyl-meso-2,6-diaminopimeloyl-D-alanyl-D-alanine + UDP + H(+). The protein operates within cell wall biogenesis; peptidoglycan biosynthesis. In terms of biological role, cell wall formation. Catalyzes the transfer of a GlcNAc subunit on undecaprenyl-pyrophosphoryl-MurNAc-pentapeptide (lipid intermediate I) to form undecaprenyl-pyrophosphoryl-MurNAc-(pentapeptide)GlcNAc (lipid intermediate II). This chain is UDP-N-acetylglucosamine--N-acetylmuramyl-(pentapeptide) pyrophosphoryl-undecaprenol N-acetylglucosamine transferase, found in Shewanella baltica (strain OS223).